Reading from the N-terminus, the 681-residue chain is Rabphilin-3A (681 aa).

Positions M1–D21 are disordered. The region spanning Q40–G157 is the RabBD domain. Residues G88–E145 form an FYVE-type zinc finger. The Zn(2+) site is built by C94, C97, C111, C114, C119, C122, C137, and C140. The disordered stretch occupies residues V162–D375. The segment covering A199 to P208 has biased composition (basic and acidic residues). R223 is modified (omega-N-methylarginine). Basic and acidic residues predominate over residues R243 to H252. Phosphoserine is present on S271. The span at A278 to P296 shows a compositional bias: pro residues. Low complexity predominate over residues A347 to A356. Residues A362–D375 show a composition bias toward acidic residues. Residues T379–I501 enclose the C2 1 domain. Ca(2+) is bound by residues M409, D410, D416, D471, E472, D473, E479, E526, D568, D574, D628, Y629, D630, and D636. The C2 2 domain occupies E537–H670. Phosphoserine is present on residues S679 and S680.

As to quaternary structure, interacts with RAB3B, RAB3C, RAB3D, RAB8A, RAB27A and RAB27B. Interacts with RAB3A; this interaction recruits RPH3A to synaptic vesicules. Interacts (via C2B domain) with SNAP25. Interacts with deubiquitinating enzyme CAND1; this interaction results in the deubiquitination of RPH3A. Interacts with GRIN2A and DLG4; this ternary complex regulates NMDA receptor composition at postsynaptic membranes. Interacts with SNCA. It depends on Ca(2+) as a cofactor. Post-translationally, ubiquitinated. Deubiquitinated by CAND1 to prevent its degradation. In terms of tissue distribution, specifically expressed in brain.

It localises to the cytoplasmic vesicle. The protein resides in the secretory vesicle. Its subcellular location is the synaptic vesicle membrane. It is found in the cell projection. The protein localises to the dendritic spine. It localises to the postsynaptic cell membrane. The protein resides in the membrane. Its function is as follows. Plays an essential role in docking and fusion steps of regulated exocytosis. At the presynaptic level, RPH3A is recruited by RAB3A to the synaptic vesicle membrane in a GTP-dependent manner where it modulates synaptic vesicle trafficking and calcium-triggered neurotransmitter release. In the post-synaptic compartment, forms a ternary complex with GRIN2A and DLG4 and regulates NMDA receptor stability. Also plays a role in the exocytosis of arginine vasopressin hormone. The protein is Rabphilin-3A (Rph3a) of Mus musculus (Mouse).